A 433-amino-acid polypeptide reads, in one-letter code: Tol-Pal system protein TolB (433 aa).

Positions 1–26 are cleaved as a signal peptide; it reads MSLMTKLGFRALVASCLIAAGGAAHA.

Belongs to the TolB family. The Tol-Pal system is composed of five core proteins: the inner membrane proteins TolA, TolQ and TolR, the periplasmic protein TolB and the outer membrane protein Pal. They form a network linking the inner and outer membranes and the peptidoglycan layer.

Its subcellular location is the periplasm. Functionally, part of the Tol-Pal system, which plays a role in outer membrane invagination during cell division and is important for maintaining outer membrane integrity. The chain is Tol-Pal system protein TolB from Burkholderia thailandensis (strain ATCC 700388 / DSM 13276 / CCUG 48851 / CIP 106301 / E264).